The sequence spans 324 residues: MKQVNGEKLLASLGDGVKDIRGRITPDAPMDRVTWFRAGGLAELMFQPHDIDDLVAFLKILPEEVPLTVVGVGSNILVRDGGIPGVVLRLSAKGFGFVELAGENRILAGAICPDKHVAAMAMDNGIGGFHFFYGIPGGIGGAARMNAGANGVETRERLIEVHAVDRKGDKHVLSNAEMGYSYRHSTASTDLIFTSVLFEGYPEERAQIRAEMDAVRNHRETVQPVREKTGGSTFKNPAGHSAWKLIDEAGCRGLVIGGAQMSSLHCNFMINMGQATGYDLEYLGEQVRREVFEKDGIKLEWEIKRLGVFMPGREVRPFHGVTSE.

Residues 36–203 (FRAGGLAELM…TSVLFEGYPE (168 aa)) enclose the FAD-binding PCMH-type domain. Arg-183 is an active-site residue. Ser-232 acts as the Proton donor in catalysis. The active site involves Glu-302.

This sequence belongs to the MurB family. FAD serves as cofactor.

It is found in the cytoplasm. The catalysed reaction is UDP-N-acetyl-alpha-D-muramate + NADP(+) = UDP-N-acetyl-3-O-(1-carboxyvinyl)-alpha-D-glucosamine + NADPH + H(+). The protein operates within cell wall biogenesis; peptidoglycan biosynthesis. In terms of biological role, cell wall formation. The sequence is that of UDP-N-acetylenolpyruvoylglucosamine reductase from Rhizobium johnstonii (strain DSM 114642 / LMG 32736 / 3841) (Rhizobium leguminosarum bv. viciae).